A 225-amino-acid polypeptide reads, in one-letter code: UPF0173 metal-dependent hydrolase PAE2160 (225 aa).

It belongs to the UPF0173 family.

The sequence is that of UPF0173 metal-dependent hydrolase PAE2160 from Pyrobaculum aerophilum (strain ATCC 51768 / DSM 7523 / JCM 9630 / CIP 104966 / NBRC 100827 / IM2).